The sequence spans 563 residues: Arginine--tRNA ligase (563 aa).

The 'HIGH' region signature appears at 121 to 131 (PNIAKPFSIGH).

It belongs to the class-I aminoacyl-tRNA synthetase family. Monomer.

The protein localises to the cytoplasm. It carries out the reaction tRNA(Arg) + L-arginine + ATP = L-arginyl-tRNA(Arg) + AMP + diphosphate. The protein is Arginine--tRNA ligase of Streptococcus thermophilus (strain ATCC BAA-250 / LMG 18311).